Here is a 377-residue protein sequence, read N- to C-terminus: Histidinol-phosphate aminotransferase 2 (377 aa).

Positions 17 to 44 are disordered; that stretch reads NLSPYVPGEQPQHDDLCKLNTNENPFPP. K228 bears the N6-(pyridoxal phosphate)lysine mark.

It belongs to the class-II pyridoxal-phosphate-dependent aminotransferase family. Histidinol-phosphate aminotransferase subfamily. In terms of assembly, homodimer. Pyridoxal 5'-phosphate is required as a cofactor.

It carries out the reaction L-histidinol phosphate + 2-oxoglutarate = 3-(imidazol-4-yl)-2-oxopropyl phosphate + L-glutamate. The protein operates within amino-acid biosynthesis; L-histidine biosynthesis; L-histidine from 5-phospho-alpha-D-ribose 1-diphosphate: step 7/9. This chain is Histidinol-phosphate aminotransferase 2, found in Psychrobacter arcticus (strain DSM 17307 / VKM B-2377 / 273-4).